Here is a 75-residue protein sequence, read N- to C-terminus: Putative UPF0377 protein YAL067W-A (75 aa).

It belongs to the UPF0377 family.

This Saccharomyces cerevisiae (strain ATCC 204508 / S288c) (Baker's yeast) protein is Putative UPF0377 protein YAL067W-A.